A 614-amino-acid polypeptide reads, in one-letter code: MQVLLITISLAVLPYLGSSIILESGIVNDYEVVNPQKVTAMLKGAVKQPEQKYEDTMQYEFKVKGEPVVLHLEKNKGLFSEDYSETHYSPDGREITTNPPVEDHCYYHGRIQNDADSSASISACNGLKGHFKLRGEMYFIEPLKIPDSEAHAVYKYENIEEEDEAPKMCGVKHTNRESDKSIKKASQLNLTPEQQRYLNTPKHIKVAIVADYLIFRKYGRNLFTIRAKIYEILNILNEIYKAFNIHVALVFLEIWSNGDKINLFPAANVTLDLFGKWRERDLMNRKNHDNTQLLTGMNFDGPTAGLGYVGTMCHPQFSAAVVQDHNKINFLVALAMAHELGHNLGMTHDEQFCTCGAKSCIMSATLSCEGSYRFSNCSREENRRYLINKMPQCILIKPSRTDIVSPPVCGNSLVEVGEDCDCGSPGYCRNPCCNAATCKLTPGSQCADGECCDQCRFTRAGTECRPARDECDKADLCTGQSAECPADQFQRNGQPCQNNSGYCYNGICPVMRNQCISLFGSRAIVAEDACFQFNSLGIDYGYCRKENGRKIPCAPEDVKCGRLYCFDNLPEHKNPCQIFYTPRDEDKGMVDPGTKCENGKVCINGKCVDVNTAY.

The signal sequence occupies residues 1–19; it reads MQVLLITISLAVLPYLGSS. Residues 20-193 constitute a propeptide that is removed on maturation; the sequence is IILESGIVND…KASQLNLTPE (174 aa). Pyrrolidone carboxylic acid is present on Gln194. Residues 202 to 398 enclose the Peptidase M12B domain; it reads KHIKVAIVAD…KMPQCILIKP (197 aa). A glycan (N-linked (GlcNAc...) asparagine) is linked at Asn268. Intrachain disulfides connect Cys313–Cys393, Cys353–Cys377, and Cys355–Cys360. His338 contributes to the Zn(2+) binding site. The active site involves Glu339. Residues His342 and His348 each coordinate Zn(2+). Residue Asn376 is glycosylated (N-linked (GlcNAc...) asparagine). The 87-residue stretch at 406 to 492 folds into the Disintegrin domain; that stretch reads PPVCGNSLVE…ECPADQFQRN (87 aa). The Ca(2+) site is built by Val408, Asn411, Leu413, Glu415, Glu418, and Asp421. Disulfide bonds link Cys409–Cys438, Cys420–Cys433, Cys422–Cys428, Cys432–Cys455, Cys446–Cys452, Cys451–Cys477, Cys464–Cys484, Cys471–Cys503, Cys496–Cys508, Cys515–Cys565, Cys530–Cys576, Cys543–Cys553, Cys560–Cys602, and Cys596–Cys607. The short motif at 470–472 is the D/ECD-tripeptide element; it reads ECD. Asn498 carries N-linked (GlcNAc...) asparagine glycosylation.

This sequence belongs to the venom metalloproteinase (M12B) family. P-III subfamily. P-IIIc sub-subfamily. As to quaternary structure, heterodimer; disulfide-linked. It depends on Zn(2+) as a cofactor. In terms of tissue distribution, expressed by the venom gland.

Its subcellular location is the secreted. Its function is as follows. This metalloproteinase hydrolyzes azocasein, and oxidized insulin B-chain. Also hydrolyzes the alpha-chain (FGA) and more slowly the beta-chain of fibrinogen (FGB), without affecting the gamma-chain. Does not cleave fibrin. Inhibits endothelial cell adhesion to extracellular matrix proteins such as fibrinogen, fibronectin, vitronectin, collagen I, and collagen IV. Induces apoptosis in vascular endothelial cells. The chain is Zinc metalloproteinase-disintegrin-like Eoc1 (Svmp3-Eoc1) from Echis ocellatus (Ocellated saw-scaled viper).